The primary structure comprises 213 residues: Ras-related protein Rab-25 (213 aa).

Residues Ser21, Gly24, Lys25, Thr26, Asn27, Ser38, His39, Thr43, and Thr44 each contribute to the GTP site. Residue Thr26 participates in Mg(2+) binding. Short sequence motifs (switch) lie at residues 35–49 and 67–84; these read NEFSHDSRTTIGVEF and DTAGLERYRAITSAYYRG. 2 residues coordinate Mg(2+): Thr44 and Asp67. The GTP site is built by Gly70, Asn125, Lys126, Asp128, Ala156, and Leu157. Residues Cys209 and Cys210 are each lipidated (S-geranylgeranyl cysteine). At Cys210 the chain carries Cysteine methyl ester. Residues 211–213 constitute a propeptide, removed in mature form; it reads ISL.

Belongs to the small GTPase superfamily. Rab family. As to quaternary structure, interacts (GTP-bound form) with RAB11FIP1, RAB11FIP2, RAB11FIP3 and RAB11FIP4. Interacts (via the hypervariable C-terminal region) with ITGB1 (via the cytoplasmic region); the interaction is GTP-dependent. Interacts with ITGAV. Associates with the integrin alpha-V/beta-1 heterodimer. Interacts with VPS33B. Requires Mg(2+) as cofactor. As to expression, expression is restricted to epithelial cells. Expressed in ovarian epithelium (NOE) and breast tissue. Expressed in ovarian cancer; expression is increased relative to NOE cells. Expression in ovarian cancer is stage dependent, with stage III and stage IV showing higher levels than early stage cancers. Expressed in breast cancer; expression is increased relative to normal breast tissue.

The protein localises to the cell membrane. It is found in the cytoplasmic vesicle. The protein resides in the cell projection. Its subcellular location is the pseudopodium membrane. It carries out the reaction GTP + H2O = GDP + phosphate + H(+). Regulated by guanine nucleotide exchange factors (GEFs) which promote the exchange of bound GDP for free GTP. Regulated by GTPase activating proteins (GAPs) which increase the GTP hydrolysis activity. Inhibited by GDP dissociation inhibitors (GDIs) which prevent Rab-GDP dissociation. Functionally, the small GTPases Rab are key regulators of intracellular membrane trafficking, from the formation of transport vesicles to their fusion with membranes. Rabs cycle between an inactive GDP-bound form and an active GTP-bound form that is able to recruit to membranes different set of downstream effectors directly responsible for vesicle formation, movement, tethering and fusion. RAB25 regulates epithelial cell differentiation, proliferation and survival, thereby playing key roles in tumorigenesis. Promotes invasive migration of cells in which it functions to localize and maintain integrin alpha-V/beta-1 at the tips of extending pseudopodia. Involved in the regulation of epithelial morphogenesis through the control of CLDN4 expression and localization at tight junctions. May selectively regulate the apical recycling pathway. Together with MYO5B regulates transcytosis. The chain is Ras-related protein Rab-25 from Homo sapiens (Human).